The primary structure comprises 877 residues: MHPFSQLFRNIQSLGEEEVQELLGPPEDALPLLAGEDLNHRVAGLNLQLPTADLDWVHQTNAITGLYSTQTAKFNPEWKQPDFPKIHLSEDLFLNYNNFCGPLTVNEKRKLKLNFPARFFPKATKYFPLSKGIKNNYPDFSIEHFFAAATYLWTLWESGILYLRKNQTTLTFKGKPYSWGHRQLEQHNGQQHESHLQSRESSSMVASSGHILHKQHASGPSSFPTRDLPNNFFGESQKSARTGGSVREKIQTNRLGFPGKSKITIGQQGSSQVSSPRSKSSNFRNQTQANHSSWNQRHPTWYSTTSNTTQSRQREETYSSDSAFKRHSPSFEHEKSEPSSSGLCGGTESLNNTGTSTFCLWRSFYNTEPCGAYCLHHIVSSLEDWGPCTISGDVTIRSPRTPRRITGGVFLVDKHPHNSSESRLVVDFSQFSRGHTRVHWPKFAVLNLQALANLLSTNLQWLSLDVSAAFYHIPVSPAAVPHLLVGSPGLERFTPSMSHTTIHGNNSKLQTMHNLCSRHLFNSLLLLFKTYGRKLHLLAHPFIMGFRKLPMGVGLSPFLLAQFTSALASMVRRNFPHCVAFAYMDDLVLGARTHEHLTAIYSHICSVFLDLGIHLNVAKTKWWGHHLHFMGYVITGAGILPQDKHVQKVSTYLKSIPLNKPLDYKICERLTGILNYVAPFTKCGYAALLPLYQATSRTAFVFSSLYHSWLLSLYAELWPVARQRGVVCSVSDATPTGWGICTTYQLISPTGAFALPIATADVIAACLARCWTGARLLGTDNSVVLSGKLTSYPWLLACVANWILRGTSFCYVPSAANPADLPSRGLLPALHPVPTLRFRPQLSRISLWAASPPVSPRRPVRVAWASPVQNSEPWFPP.

The tract at residues 1–183 is terminal protein domain (TP); it reads MHPFSQLFRN…GKPYSWGHRQ (183 aa). The segment at 184–382 is spacer; the sequence is LEQHNGQQHE…YCLHHIVSSL (199 aa). Residues 185–198 show a composition bias toward basic and acidic residues; that stretch reads EQHNGQQHESHLQS. Residues 185–347 are disordered; sequence EQHNGQQHES…PSSSGLCGGT (163 aa). Over residues 233 to 242 the composition is skewed to polar residues; sequence FGESQKSART. Positions 267-281 are enriched in low complexity; that stretch reads QQGSSQVSSPRSKSS. 2 stretches are compositionally biased toward polar residues: residues 282–302 and 338–347; these read NFRN…PTWY and PSSSGLCGGT. Residues 383 to 723 form a polymerase/reverse transcriptase domain (RT) region; it reads EDWGPCTISG…YAELWPVARQ (341 aa). Residues 393–634 enclose the Reverse transcriptase domain; sequence DVTIRSPRTP…HHLHFMGYVI (242 aa). Mg(2+) is bound by residues aspartate 465, aspartate 585, and aspartate 586.

Belongs to the hepadnaviridae P protein family.

It catalyses the reaction DNA(n) + a 2'-deoxyribonucleoside 5'-triphosphate = DNA(n+1) + diphosphate. The enzyme catalyses Endonucleolytic cleavage to 5'-phosphomonoester.. Its activity is regulated as follows. Activated by host HSP70 and HSP40 in vitro to be able to bind the epsilon loop of the pgRNA. Because deletion of the RNase H region renders the protein partly chaperone-independent, the chaperones may be needed indirectly to relieve occlusion of the RNA-binding site by this domain. Inhibited by several reverse-transcriptase inhibitors: Lamivudine, Adefovir and Entecavir. Multifunctional enzyme that converts the viral RNA genome into dsDNA in viral cytoplasmic capsids. This enzyme displays a DNA polymerase activity that can copy either DNA or RNA templates, and a ribonuclease H (RNase H) activity that cleaves the RNA strand of RNA-DNA heteroduplexes in a partially processive 3'- to 5'-endonucleasic mode. Neo-synthesized pregenomic RNA (pgRNA) are encapsidated together with the P protein, and reverse-transcribed inside the nucleocapsid. Initiation of reverse-transcription occurs first by binding the epsilon loop on the pgRNA genome, and is initiated by protein priming, thereby the 5'-end of (-)DNA is covalently linked to P protein. Partial (+)DNA is synthesized from the (-)DNA template and generates the relaxed circular DNA (RC-DNA) genome. After budding and infection, the RC-DNA migrates in the nucleus, and is converted into a plasmid-like covalently closed circular DNA (cccDNA). The activity of P protein does not seem to be necessary for cccDNA generation, and is presumably released from (+)DNA by host nuclear DNA repair machinery. In Arctic squirrel hepatitis virus (ASHV), this protein is Protein P.